Consider the following 120-residue polypeptide: T-cell receptor beta chain V region PHDS203 (120 aa).

Residues valine 1–valine 11 form the signal peptide. Residues aspartate 12–alanine 106 form a v segment region. A disulfide bridge links cysteine 34 with cysteine 102. The segment at proline 107 to leucine 120 is j segment.

The chain is T-cell receptor beta chain V region PHDS203 from Mus musculus (Mouse).